Reading from the N-terminus, the 153-residue chain is Aspartate carbamoyltransferase regulatory chain (153 aa).

4 residues coordinate Zn(2+): Cys109, Cys114, Cys138, and Cys141.

Belongs to the PyrI family. Contains catalytic and regulatory chains. Zn(2+) serves as cofactor.

Functionally, involved in allosteric regulation of aspartate carbamoyltransferase. This is Aspartate carbamoyltransferase regulatory chain from Escherichia coli O7:K1 (strain IAI39 / ExPEC).